The sequence spans 258 residues: MPKTLTEKLNAIKAAGKGIFVPYIMAGDHEKGLDGLGETIHFLEDLGVSAIEVGIPFSDPVADGPVIEEAGLRSLAHGTSTQALVETLKTIETEIPLVIMTYFNPLFQYGVENFVKDLADTAVKGLIIPDLPHEHANFVEPFLADTDIALIPLVSLTTGIERQKELIEGAEGFVYAVAINGVTGKSGNYRADLDKHLAQLHQVADIPVLTGFGVSSQADLERFNAVSDGVIVGSKIVKALHQGEPIQDFIKQAVAYQK.

Catalysis depends on proton acceptor residues glutamate 52 and aspartate 63.

The protein belongs to the TrpA family. As to quaternary structure, tetramer of two alpha and two beta chains.

It catalyses the reaction (1S,2R)-1-C-(indol-3-yl)glycerol 3-phosphate + L-serine = D-glyceraldehyde 3-phosphate + L-tryptophan + H2O. Its pathway is amino-acid biosynthesis; L-tryptophan biosynthesis; L-tryptophan from chorismate: step 5/5. Its function is as follows. The alpha subunit is responsible for the aldol cleavage of indoleglycerol phosphate to indole and glyceraldehyde 3-phosphate. The polypeptide is Tryptophan synthase alpha chain (Streptococcus pneumoniae (strain JJA)).